A 62-amino-acid chain; its full sequence is Omega-lycotoxin-Am1e (62 aa).

The propeptide occupies 1 to 15; that stretch reads EDEVEETLPVAEEGR. 4 disulfide bridges follow: Cys19–Cys34, Cys26–Cys39, Cys33–Cys59, and Cys41–Cys57.

Belongs to the neurotoxin omega-lctx family. As to expression, expressed by the venom gland.

The protein localises to the secreted. Its function is as follows. Modulates Cav2.1/CACNA1A voltage-gated calcium channels (P/Q-type currents) in rat cerebellar Purkinje cells and hippocampal CA1-CA3 neurons. At saturating concentrations (&gt;10 nM) decelerates activation kinetics and slightly increases peak amplitude without affecting deactivation kinetics. In vivo, does not cause death when intravenously injected into mice. In rat models, through its activity on Cav2.1/CACNA1A, has an ameliorative effect on memory defects provoked by hyperstimulation of N-methyl-D-aspartate receptors (NMDARs) in the hippocampus. The sequence is that of Omega-lycotoxin-Am1e from Alopecosa marikovskyi (Wolf spider).